The primary structure comprises 358 residues: Acid phosphatase (358 aa).

An N-terminal signal peptide occupies residues 1–17 (MKFSTIALPLLASAALA). Residues Asn-20, Asn-27, and Asn-32 are each glycosylated (N-linked (GlcNAc...) asparagine). Residues 21–41 (SSHSGTNATSHNSTVPNENSK) form a disordered region. The Mg(2+) site is built by Asp-49, Asp-50, and Ser-81. N-linked (GlcNAc...) asparagine glycosylation is found at Asn-92 and Asn-145. Asn-156 is a Mg(2+) binding site. Residue Ser-189 is part of the active site. 2 N-linked (GlcNAc...) asparagine glycosylation sites follow: Asn-199 and Asn-278.

Belongs to the SurE nucleotidase family. Mg(2+) is required as a cofactor.

The protein localises to the secreted. The catalysed reaction is a phosphate monoester + H2O = an alcohol + phosphate. Its function is as follows. Probably serves to scavenge phosphorus for growing cells. In Yarrowia lipolytica (strain CLIB 122 / E 150) (Yeast), this protein is Acid phosphatase (PHO2).